The sequence spans 485 residues: Ribulose bisphosphate carboxylase large chain (485 aa).

The substrate site is built by Asn124 and Thr174. Residue Lys176 is the Proton acceptor of the active site. Lys178 contacts substrate. Lys202, Asp204, and Glu205 together coordinate Mg(2+). At Lys202 the chain carries N6-carboxylysine. His294 acts as the Proton acceptor in catalysis. Substrate is bound by residues Arg295, His327, and Ser379.

This sequence belongs to the RuBisCO large chain family. Type I subfamily. Heterohexadecamer of 8 large chains and 8 small chains. The cofactor is Mg(2+).

It catalyses the reaction 2 (2R)-3-phosphoglycerate + 2 H(+) = D-ribulose 1,5-bisphosphate + CO2 + H2O. The catalysed reaction is D-ribulose 1,5-bisphosphate + O2 = 2-phosphoglycolate + (2R)-3-phosphoglycerate + 2 H(+). RuBisCO catalyzes two reactions: the carboxylation of D-ribulose 1,5-bisphosphate, the primary event in carbon dioxide fixation, as well as the oxidative fragmentation of the pentose substrate. Both reactions occur simultaneously and in competition at the same active site. In Rhodopseudomonas palustris (strain BisA53), this protein is Ribulose bisphosphate carboxylase large chain.